The primary structure comprises 95 residues: Co-chaperonin GroES (95 aa).

The protein belongs to the GroES chaperonin family. In terms of assembly, heptamer of 7 subunits arranged in a ring. Interacts with the chaperonin GroEL.

Its subcellular location is the cytoplasm. In terms of biological role, together with the chaperonin GroEL, plays an essential role in assisting protein folding. The GroEL-GroES system forms a nano-cage that allows encapsulation of the non-native substrate proteins and provides a physical environment optimized to promote and accelerate protein folding. GroES binds to the apical surface of the GroEL ring, thereby capping the opening of the GroEL channel. The chain is Co-chaperonin GroES from Marinobacter nauticus (strain ATCC 700491 / DSM 11845 / VT8) (Marinobacter aquaeolei).